The following is a 1020-amino-acid chain: Protein translocase subunit SecA (1020 aa).

Residues Gln143, 161-165, and Asp661 contribute to the ATP site; that span reads GEGKT. Positions 974–1020 are disordered; that stretch reads SVYNASPGAENEAPLQRPVTADSKPGRNDPCPCGSGKKYKNCHGQQP. Zn(2+) is bound by residues Cys1004, Cys1006, Cys1015, and His1016.

Belongs to the SecA family. As to quaternary structure, monomer and homodimer. Part of the essential Sec protein translocation apparatus which comprises SecA, SecYEG and auxiliary proteins SecDF. Other proteins may also be involved. Requires Zn(2+) as cofactor.

Its subcellular location is the cell inner membrane. It is found in the cytoplasm. The enzyme catalyses ATP + H2O + cellular proteinSide 1 = ADP + phosphate + cellular proteinSide 2.. In terms of biological role, part of the Sec protein translocase complex. Interacts with the SecYEG preprotein conducting channel. Has a central role in coupling the hydrolysis of ATP to the transfer of proteins into and across the cell membrane, serving as an ATP-driven molecular motor driving the stepwise translocation of polypeptide chains across the membrane. This Chlorobium phaeovibrioides (strain DSM 265 / 1930) (Prosthecochloris vibrioformis (strain DSM 265)) protein is Protein translocase subunit SecA.